The chain runs to 436 residues: ATP-dependent protease ATPase subunit HslU (436 aa).

ATP-binding positions include I18, 60 to 65, D249, E314, and R386; that span reads GVGKTE.

This sequence belongs to the ClpX chaperone family. HslU subfamily. As to quaternary structure, a double ring-shaped homohexamer of HslV is capped on each side by a ring-shaped HslU homohexamer. The assembly of the HslU/HslV complex is dependent on binding of ATP.

It localises to the cytoplasm. Its function is as follows. ATPase subunit of a proteasome-like degradation complex; this subunit has chaperone activity. The binding of ATP and its subsequent hydrolysis by HslU are essential for unfolding of protein substrates subsequently hydrolyzed by HslV. HslU recognizes the N-terminal part of its protein substrates and unfolds these before they are guided to HslV for hydrolysis. The polypeptide is ATP-dependent protease ATPase subunit HslU (Ruegeria sp. (strain TM1040) (Silicibacter sp.)).